Reading from the N-terminus, the 257-residue chain is UPF0246 protein A1S_2267 (257 aa).

The protein belongs to the UPF0246 family.

This is UPF0246 protein A1S_2267 from Acinetobacter baumannii (strain ATCC 17978 / DSM 105126 / CIP 53.77 / LMG 1025 / NCDC KC755 / 5377).